A 495-amino-acid chain; its full sequence is tRNA(Ile)-lysidine synthase (495 aa).

ATP is bound at residue Ser26–Ser31.

Belongs to the tRNA(Ile)-lysidine synthase family.

The protein localises to the cytoplasm. It catalyses the reaction cytidine(34) in tRNA(Ile2) + L-lysine + ATP = lysidine(34) in tRNA(Ile2) + AMP + diphosphate + H(+). Functionally, ligates lysine onto the cytidine present at position 34 of the AUA codon-specific tRNA(Ile) that contains the anticodon CAU, in an ATP-dependent manner. Cytidine is converted to lysidine, thus changing the amino acid specificity of the tRNA from methionine to isoleucine. The protein is tRNA(Ile)-lysidine synthase of Bartonella tribocorum (strain CIP 105476 / IBS 506).